The sequence spans 96 residues: Co-chaperonin GroES (96 aa).

Belongs to the GroES chaperonin family. In terms of assembly, heptamer of 7 subunits arranged in a ring. Interacts with the chaperonin GroEL.

The protein localises to the cytoplasm. In terms of biological role, together with the chaperonin GroEL, plays an essential role in assisting protein folding. The GroEL-GroES system forms a nano-cage that allows encapsulation of the non-native substrate proteins and provides a physical environment optimized to promote and accelerate protein folding. GroES binds to the apical surface of the GroEL ring, thereby capping the opening of the GroEL channel. The sequence is that of Co-chaperonin GroES from Hydrogenovibrio crunogenus (strain DSM 25203 / XCL-2) (Thiomicrospira crunogena).